A 447-amino-acid chain; its full sequence is D-ribitol-5-phosphate cytidylyltransferase (447 aa).

It belongs to the IspD/TarI cytidylyltransferase family. IspD subfamily. Homodimer.

The protein resides in the cytoplasm. Its subcellular location is the cytosol. It carries out the reaction D-ribitol 5-phosphate + CTP + H(+) = CDP-L-ribitol + diphosphate. The enzyme catalyses D-ribose 5-phosphate + CTP + H(+) = CDP-D-ribose + diphosphate. It catalyses the reaction D-ribulose 5-phosphate + CTP + H(+) = CDP-D-ribulose + diphosphate. The protein operates within protein modification; protein glycosylation. In terms of biological role, cytidylyltransferase required for protein O-linked mannosylation. Catalyzes the formation of CDP-ribitol nucleotide sugar from D-ribitol 5-phosphate. CDP-ribitol is a substrate of FKTN during the biosynthesis of the phosphorylated O-mannosyl trisaccharide (N-acetylgalactosamine-beta-3-N-acetylglucosamine-beta-4-(phosphate-6-)mannose), a carbohydrate structure present in alpha-dystroglycan (DAG1), which is required for binding laminin G-like domain-containing extracellular proteins with high affinity. Shows activity toward other pentose phosphate sugars and mediates formation of CDP-ribulose or CDP-ribose using CTP and ribulose-5-phosphate or ribose-5-phosphate, respectively. Not involved in dolichol production. This Rattus norvegicus (Rat) protein is D-ribitol-5-phosphate cytidylyltransferase (Crppa).